Reading from the N-terminus, the 124-residue chain is Membrane-anchored ubiquitin-fold protein 2 (124 aa).

One can recognise a Ubiquitin-like domain in the interval 8 to 74 (LEIKFRLNDG…LENNKTVGDC (67 aa)). Residues Cys-115, Cys-117, Cys-119, and Cys-124 are each lipidated (S-palmitoyl cysteine).

In terms of processing, acylated protein. Probably modified with palmitate. In terms of tissue distribution, ubiquitous, but three fold higher expression in stamens.

It is found in the cell membrane. Its function is as follows. May serve as docking site to facilitate the association of other proteins to the plasma membrane. The polypeptide is Membrane-anchored ubiquitin-fold protein 2 (MUB2) (Arabidopsis thaliana (Mouse-ear cress)).